The primary structure comprises 201 residues: MBF complex negative regulatory component yox1 (201 aa).

Residues 1–22 are compositionally biased toward polar residues; that stretch reads MSLSDSPSKSGNTGKDLISNNE. A disordered region spans residues 1 to 42; sequence MSLSDSPSKSGNTGKDLISNNEAKNHEDEETHQKKRRRRTTD. Over residues 23 to 32 the composition is skewed to basic and acidic residues; the sequence is AKNHEDEETH. The segment at residues 33–92 is a DNA-binding region (homeobox); the sequence is QKKRRRRTTDAEATLLEQYFLKTPKPSLIERQELSKKLKSSMTPRELQIWFQNKRQSLRR.

Component of the MBF transcription factor complex. In terms of processing, phosphorylated in response to hydroxyurea. Phosphorylation inhibits the repressor activity and is dependent on rad3. However, the regulation of yox1 by rad3 is probably indirect.

It localises to the nucleus. Negative regulatory component of the MBF transcription factor complex involved in cell-cycle G1/S phase-specific gene expression and more particularly DNA replication checkpoint-dependent gene expression. This is MBF complex negative regulatory component yox1 (yox1) from Schizosaccharomyces pombe (strain 972 / ATCC 24843) (Fission yeast).